A 429-amino-acid polypeptide reads, in one-letter code: Enolase (429 aa).

Gln-163 contacts (2R)-2-phosphoglycerate. Glu-205 functions as the Proton donor in the catalytic mechanism. Mg(2+)-binding residues include Asp-242, Glu-287, and Asp-314. (2R)-2-phosphoglycerate contacts are provided by Lys-339, Arg-368, Ser-369, and Lys-390. The active-site Proton acceptor is the Lys-339.

This sequence belongs to the enolase family. Mg(2+) is required as a cofactor.

Its subcellular location is the cytoplasm. It localises to the secreted. The protein localises to the cell surface. It catalyses the reaction (2R)-2-phosphoglycerate = phosphoenolpyruvate + H2O. It participates in carbohydrate degradation; glycolysis; pyruvate from D-glyceraldehyde 3-phosphate: step 4/5. Functionally, catalyzes the reversible conversion of 2-phosphoglycerate (2-PG) into phosphoenolpyruvate (PEP). It is essential for the degradation of carbohydrates via glycolysis. The polypeptide is Enolase (Cupriavidus taiwanensis (strain DSM 17343 / BCRC 17206 / CCUG 44338 / CIP 107171 / LMG 19424 / R1) (Ralstonia taiwanensis (strain LMG 19424))).